Consider the following 755-residue polypeptide: Exocyst complex component 3 (755 aa).

Coiled coils occupy residues Asp34–Gln62 and Arg618–Phe649. Lys38 carries the post-translational modification N6-acetyllysine.

Belongs to the SEC6 family. In terms of assembly, the exocyst complex is composed of EXOC1, EXOC2, EXOC3, EXOC4, EXOC5, EXOC6, EXOC7 and EXOC8. Interacts with EXOC3L1. Interacts with BIRC6/bruce. Interacts with MYRIP. Interacts with SLC6A9. In terms of tissue distribution, widely expressed, with highest levels in kidney, followed by brain (at protein level).

Its subcellular location is the cytoplasm. The protein localises to the perinuclear region. It localises to the cell projection. The protein resides in the growth cone. It is found in the neuron projection. Its subcellular location is the midbody. The protein localises to the golgi apparatus. Functionally, component of the exocyst complex involved in the docking of exocytic vesicles with fusion sites on the plasma membrane. In Rattus norvegicus (Rat), this protein is Exocyst complex component 3 (Exoc3).